Here is a 569-residue protein sequence, read N- to C-terminus: Carboxylesterase 3 (569 aa).

The signal sequence occupies residues 1-24 (MRLHRLRARLNAVAFGLLLLLVHG). A disulfide bridge links cysteine 95 with cysteine 122. N-linked (GlcNAc...) asparagine glycosylation is present at asparagine 103. Catalysis depends on serine 227, which acts as the Acyl-ester intermediate. Cysteine 279 and cysteine 290 are disulfide-bonded. Catalysis depends on charge relay system residues glutamate 345 and histidine 458. Residues 566–569 (QEDL) carry the Prevents secretion from ER motif.

The protein belongs to the type-B carboxylesterase/lipase family. N-glycosylated.

Its subcellular location is the endoplasmic reticulum lumen. It catalyses the reaction a carboxylic ester + H2O = an alcohol + a carboxylate + H(+). In terms of biological role, involved in the detoxification of xenobiotics and in the activation of ester and amide prodrugs. The chain is Carboxylesterase 3 (CES3) from Pongo abelii (Sumatran orangutan).